A 208-amino-acid chain; its full sequence is Imidazoleglycerol-phosphate dehydratase (208 aa).

The protein belongs to the imidazoleglycerol-phosphate dehydratase family.

Its subcellular location is the cytoplasm. The enzyme catalyses D-erythro-1-(imidazol-4-yl)glycerol 3-phosphate = 3-(imidazol-4-yl)-2-oxopropyl phosphate + H2O. Its pathway is amino-acid biosynthesis; L-histidine biosynthesis; L-histidine from 5-phospho-alpha-D-ribose 1-diphosphate: step 6/9. The protein is Imidazoleglycerol-phosphate dehydratase of Anaeromyxobacter dehalogenans (strain 2CP-1 / ATCC BAA-258).